Consider the following 519-residue polypeptide: MSNNVIIFDTTLRDGEQALQASLSVKEKLQIAYALERLGVDIIEAGFPVSSPGDFESVQTIAREIKNSRICALARCVDNDIDVAAESLNIAEAFRIHVFLATSALHAEHKLKKSFDDIIEMGTRSIKRARRYTDDVEFSCEDAGRTHIDNLCRIVESAINAGATTINIPDTVGYTTPYQFGGIITNLFERVPNIDKAVISVHCHDDLGMAVANSITAVQAGARQVEGTINGLGERAGNCALEEVIMAIKVREQMMNVQTRINHKEIYRTSQLVSQLCNTPIHANKSIVGSNAFAHSSGIHQDGVLKNRETYEIMTPESIGLKEVQLNLTSRSGRAAVKHRMEEMGYRETDYNLDSLYAAFLRLADKKGQVFDYDLEALAFMGQQQQEPDEFVMNYFNTQSGSSTVATASVSISRKNEEITEAATGNGPVDAVYQAISRATGYPLKLVTYQLTAKGEGRDALGQVDIVVEYQGRKFHGMGLETDIVGSSANAMMHVINSIWRSEQVEIEKRKHHTTQEAV.

A Pyruvate carboxyltransferase domain is found at 5–267 (VIIFDTTLRD…QTRINHKEIY (263 aa)). Mn(2+) is bound by residues Asp-14, His-202, His-204, and Asn-238. Positions 392–519 (VMNYFNTQSG…RKHHTTQEAV (128 aa)) are regulatory domain.

This sequence belongs to the alpha-IPM synthase/homocitrate synthase family. LeuA type 1 subfamily. Homodimer. The cofactor is Mn(2+).

It localises to the cytoplasm. The enzyme catalyses 3-methyl-2-oxobutanoate + acetyl-CoA + H2O = (2S)-2-isopropylmalate + CoA + H(+). It participates in amino-acid biosynthesis; L-leucine biosynthesis; L-leucine from 3-methyl-2-oxobutanoate: step 1/4. In terms of biological role, catalyzes the condensation of the acetyl group of acetyl-CoA with 3-methyl-2-oxobutanoate (2-ketoisovalerate) to form 3-carboxy-3-hydroxy-4-methylpentanoate (2-isopropylmalate). This chain is 2-isopropylmalate synthase, found in Proteus mirabilis (strain HI4320).